The sequence spans 548 residues: Chaperonin GroEL 2 (548 aa).

ATP-binding positions include 29-32 (TLGP), 86-90 (DGTTT), Gly418, 482-484 (NAA), and Asp498.

Belongs to the chaperonin (HSP60) family. As to quaternary structure, forms a cylinder of 14 subunits composed of two heptameric rings stacked back-to-back. Interacts with the co-chaperonin GroES.

The protein resides in the cytoplasm. It carries out the reaction ATP + H2O + a folded polypeptide = ADP + phosphate + an unfolded polypeptide.. Together with its co-chaperonin GroES, plays an essential role in assisting protein folding. The GroEL-GroES system forms a nano-cage that allows encapsulation of the non-native substrate proteins and provides a physical environment optimized to promote and accelerate protein folding. In Corynebacterium glutamicum (strain ATCC 13032 / DSM 20300 / JCM 1318 / BCRC 11384 / CCUG 27702 / LMG 3730 / NBRC 12168 / NCIMB 10025 / NRRL B-2784 / 534), this protein is Chaperonin GroEL 2.